The sequence spans 325 residues: 4-hydroxy-3-methylbut-2-enyl diphosphate reductase (325 aa).

Cys13 serves as a coordination point for [4Fe-4S] cluster. (2E)-4-hydroxy-3-methylbut-2-enyl diphosphate contacts are provided by His42 and His76. The dimethylallyl diphosphate site is built by His42 and His76. Positions 42 and 76 each coordinate isopentenyl diphosphate. Position 98 (Cys98) interacts with [4Fe-4S] cluster. Residue His126 participates in (2E)-4-hydroxy-3-methylbut-2-enyl diphosphate binding. His126 is a binding site for dimethylallyl diphosphate. His126 is a binding site for isopentenyl diphosphate. The Proton donor role is filled by Glu128. Position 169 (Thr169) interacts with (2E)-4-hydroxy-3-methylbut-2-enyl diphosphate. Cys230 provides a ligand contact to [4Fe-4S] cluster. (2E)-4-hydroxy-3-methylbut-2-enyl diphosphate contacts are provided by Ser258, Ser259, Asn260, and Ser306. Dimethylallyl diphosphate is bound by residues Ser258, Ser259, Asn260, and Ser306. Isopentenyl diphosphate-binding residues include Ser258, Ser259, Asn260, and Ser306.

This sequence belongs to the IspH family. Requires [4Fe-4S] cluster as cofactor.

The catalysed reaction is isopentenyl diphosphate + 2 oxidized [2Fe-2S]-[ferredoxin] + H2O = (2E)-4-hydroxy-3-methylbut-2-enyl diphosphate + 2 reduced [2Fe-2S]-[ferredoxin] + 2 H(+). It carries out the reaction dimethylallyl diphosphate + 2 oxidized [2Fe-2S]-[ferredoxin] + H2O = (2E)-4-hydroxy-3-methylbut-2-enyl diphosphate + 2 reduced [2Fe-2S]-[ferredoxin] + 2 H(+). It functions in the pathway isoprenoid biosynthesis; dimethylallyl diphosphate biosynthesis; dimethylallyl diphosphate from (2E)-4-hydroxy-3-methylbutenyl diphosphate: step 1/1. The protein operates within isoprenoid biosynthesis; isopentenyl diphosphate biosynthesis via DXP pathway; isopentenyl diphosphate from 1-deoxy-D-xylulose 5-phosphate: step 6/6. Functionally, catalyzes the conversion of 1-hydroxy-2-methyl-2-(E)-butenyl 4-diphosphate (HMBPP) into a mixture of isopentenyl diphosphate (IPP) and dimethylallyl diphosphate (DMAPP). Acts in the terminal step of the DOXP/MEP pathway for isoprenoid precursor biosynthesis. The protein is 4-hydroxy-3-methylbut-2-enyl diphosphate reductase of Chlorobium phaeobacteroides (strain BS1).